The sequence spans 201 residues: uncharacterized protein (201 aa).

Functionally, may have a role in tissue tropism within the insect larvae. This is an uncharacterized protein from Lepidoptera (butterflies and moths).